Here is a 512-residue protein sequence, read N- to C-terminus: Cytochrome P450 76C2 (512 aa).

The helical transmembrane segment at 3-23 (IIFEQALFPLFCFVLSFFIIF) threads the bilayer. Cysteine 451 is a binding site for heme.

The protein belongs to the cytochrome P450 family. Heme serves as cofactor.

It localises to the membrane. The polypeptide is Cytochrome P450 76C2 (CYP76C2) (Arabidopsis thaliana (Mouse-ear cress)).